A 466-amino-acid polypeptide reads, in one-letter code: MTITLYNTLTRKKETFVPLEEGKVKMYVCGPTVYNYIHIGNARPAIVYDTVRNYLEYKGYDVQYVSNFTDVDDKLIKAANELGEDVPTVSERFIKAYFEDVGALGCRKADLHPRVMENMDAIIEFVSELIKKGYAYESEGDVYFKTRAFEGYGKLSQQSIDELRSGARIRVGEKKEDALDFALWKAAKDGEISWDSPWGKGRPGWHIECSAMVKKYLGDEIDIHAGGQDLTFPHHENEIAQSEALTGKTFAKYWLHNGYINIDNEKMSKSLGNFVLVHDIIKQYDPQLLRFFMLSVHYRHPINYSEELLEKTKNAFNRLKTAYSNLNHRLISSTNLTDNDEEWLAKIEEHRTAFEEAMDDDFNTANAISVWFDLAKVANYYMQEDNTADHVIKAFISMFDRIGSVLGLTLGEEELVDEEIEELIEKRNEARRNRDFALSDQIRDQLKSMNIILEDTAQGTRWKRGE.

Residue Cys-29 participates in Zn(2+) binding. The 'HIGH' region motif lies at 31–41 (PTVYNYIHIGN). 3 residues coordinate Zn(2+): Cys-209, His-234, and Glu-238. Residues 266-270 (KMSKS) carry the 'KMSKS' region motif. Residue Lys-269 coordinates ATP. Ser-270 is modified (phosphoserine).

The protein belongs to the class-I aminoacyl-tRNA synthetase family. As to quaternary structure, monomer. Zn(2+) serves as cofactor.

It localises to the cytoplasm. It catalyses the reaction tRNA(Cys) + L-cysteine + ATP = L-cysteinyl-tRNA(Cys) + AMP + diphosphate. The sequence is that of Cysteine--tRNA ligase from Bacillus velezensis (strain DSM 23117 / BGSC 10A6 / LMG 26770 / FZB42) (Bacillus amyloliquefaciens subsp. plantarum).